The following is a 240-amino-acid chain: 3-deoxy-D-manno-octulosonic acid kinase (240 aa).

Residue Asp170 is part of the active site.

This sequence belongs to the protein kinase superfamily. KdkA/RfaP family.

The protein localises to the cell inner membrane. It carries out the reaction an alpha-Kdo-(2-&gt;6)-lipid IVA + ATP = a 4-O-phospho-alpha-Kdo-(2-&gt;6)-lipid IVA + ADP + H(+). It participates in bacterial outer membrane biogenesis; LPS core biosynthesis. In terms of biological role, catalyzes the ATP-dependent phosphorylation of the 3-deoxy-D-manno-octulosonic acid (Kdo) residue in Kdo-lipid IV(A) at the 4-OH position. The chain is 3-deoxy-D-manno-octulosonic acid kinase from Actinobacillus succinogenes (strain ATCC 55618 / DSM 22257 / CCUG 43843 / 130Z).